The sequence spans 249 residues: MHGLFVNKKKNDTGSTALVLKKIQSGDTKLKEEFIKDNVPYIIRTISNILGIVVDDRNSEEFSIGLAAFNEAIDRYDADKNGNFYTYSFVVIKSRLYDFIRRNRKHNNVLPFSYIEESTRVDERLLMSDASGQFEKIEVRQELVSFEKSLKEFGISLEDLVLSSPKHKDSRLLLIKIARIIADDDNMFRKLVEKKYIPMKEVLSRIKVNHKTIQRNRKFIIAVSLILRSNLYDLKEYVQGFEREGKYHG.

Positions 60–73 (EEFSIGLAAFNEAI) match the Polymerase core binding motif. The H-T-H motif DNA-binding region spans 199-218 (MKEVLSRIKVNHKTIQRNRK).

It belongs to the sigma-70 factor family. SigI subfamily. As to quaternary structure, interacts with RsgI3.

It localises to the cytoplasm. With respect to regulation, negatively regulated by the anti-sigma-I factor RsgI3. Binding of the polysaccharide substrate to RsgI3 may lead to the release and activation of SigI3. Sigma factors are initiation factors that promote the attachment of RNA polymerase to specific initiation sites and are then released. This sigma factor is involved in regulation of cellulosomal genes via an external polysaccharide-sensing mechanism. Recognizes the predicted promoters associated with sigI3 itself, pl11, ce12 and cipA. This Acetivibrio thermocellus (strain ATCC 27405 / DSM 1237 / JCM 9322 / NBRC 103400 / NCIMB 10682 / NRRL B-4536 / VPI 7372) (Clostridium thermocellum) protein is RNA polymerase sigma factor SigI3.